A 263-amino-acid polypeptide reads, in one-letter code: MKKIHPSAVIEEGAQLGDDVVIEAYAYVGKDTKIGNDVVIKQGARILSDTTIGDHSRVFSYAIVGDIPQDISYKEEQKSGVVIGKNATIREFATINSGTAKGDGFTRIGDNAFIMAYCHIAHDCLLGNNIILANNATLAGHVELGDFTVVGGLTPIHQFVKVGEGCMIAGASALSQDIVPFCLAEGNRASIRSLNLVGTRRRFDKDEVDRLSRAFKTLFRQGDLKENAKNLLENQESENVKKMCHFILETKRGIPVYRGKNNA.

It belongs to the transferase hexapeptide repeat family. LpxA subfamily. In terms of assembly, homotrimer.

Its subcellular location is the cytoplasm. It catalyses the reaction a (3R)-hydroxyacyl-[ACP] + UDP-N-acetyl-alpha-D-glucosamine = a UDP-3-O-[(3R)-3-hydroxyacyl]-N-acetyl-alpha-D-glucosamine + holo-[ACP]. Its pathway is glycolipid biosynthesis; lipid IV(A) biosynthesis; lipid IV(A) from (3R)-3-hydroxytetradecanoyl-[acyl-carrier-protein] and UDP-N-acetyl-alpha-D-glucosamine: step 1/6. Involved in the biosynthesis of lipid A, a phosphorylated glycolipid that anchors the lipopolysaccharide to the outer membrane of the cell. This Campylobacter jejuni subsp. jejuni serotype O:23/36 (strain 81-176) protein is Acyl-[acyl-carrier-protein]--UDP-N-acetylglucosamine O-acyltransferase.